We begin with the raw amino-acid sequence, 177 residues long: Coatomer subunit zeta-1 (177 aa).

Residue Met-1 is modified to N-acetylmethionine.

The protein belongs to the adaptor complexes small subunit family. In terms of assembly, oligomeric complex that consists of at least the alpha, beta, beta', gamma, delta, epsilon and zeta subunits.

It is found in the cytoplasm. The protein localises to the golgi apparatus membrane. Its subcellular location is the cytoplasmic vesicle. The protein resides in the COPI-coated vesicle membrane. The coatomer is a cytosolic protein complex that binds to dilysine motifs and reversibly associates with Golgi non-clathrin-coated vesicles, which further mediate biosynthetic protein transport from the ER, via the Golgi up to the trans Golgi network. Coatomer complex is required for budding from Golgi membranes, and is essential for the retrograde Golgi-to-ER transport of dilysine-tagged proteins. The zeta subunit may be involved in regulating the coat assembly and, hence, the rate of biosynthetic protein transport due to its association-dissociation properties with the coatomer complex. The sequence is that of Coatomer subunit zeta-1 (COPZ1) from Homo sapiens (Human).